The primary structure comprises 289 residues: MKPFKLIFISALMILIMTNATPISHLNAQANEENKKLKYEKNSALALNYHRVRKKDPLNDFISLLSGSKEIKNYSVTDQEFKSQIQWLKAHDAKFLTLKEFIKYKEKGKFPKRSVWINFDDMDQTIYDNAFPVLKKYHIPATGFLITNHIGSTNFHNLNLLSKKQLDEMYETGLWDFESHTHDLHALKKGNKSKFLDSSQSVASKDIKKSEHYLNKNYPKNERALAYPYGLINDDKIKAMKKNGIQYGFTLQEKAVTPDADNYRIPRILVSNDAFETLIKEWDGFDEEK.

The first 30 residues, 1-30 (MKPFKLIFISALMILIMTNATPISHLNAQA), serve as a signal peptide directing secretion. The NodB homology domain occupies 113–289 (RSVWINFDDM…KEWDGFDEEK (177 aa)).

The protein belongs to the polysaccharide deacetylase family.

It localises to the secreted. It is found in the cell wall. Functionally, catalyzes the N-deacetylation of poly-beta-1,6-N-acetyl-D-glucosamine (PNAG, also referred to as PIA), a biofilm adhesin polysaccharide. In fact, the IcaB deacetylase converts 15 to 20% of the GlcNAc residues of PNAG to glucosamine. N-deacetylation is crucial for attachment of the polysaccharide to the bacterial cell surface; it leads to the introduction of positive charges in the otherwise neutral PIA polymer, allowing electrostatic interactions. Deacetylation of the polymer is also essential for key virulence mechanisms of S.epidermidis, namely biofilm formation, colonization, and resistance to neutrophil phagocytosis and human antibacterial peptides. The protein is Poly-beta-1,6-N-acetyl-D-glucosamine N-deacetylase (icaB) of Staphylococcus epidermidis (strain ATCC 35984 / DSM 28319 / BCRC 17069 / CCUG 31568 / BM 3577 / RP62A).